A 721-amino-acid chain; its full sequence is MATTVVAPPGAVSDRANKRGGGPGGGGGGGGARGAEEESPPPLQAVLVADSFNRRFFPISKDQPRVLLPLANVALIDYTLEFLTATGVQETFVFCCWKAAQIKEHLQKSKWCRPTSLNVVRIITSELYRSLGDVLRDVDAKALVRSDFLLVYGDVVSNINVTRALEEHRLRRKLEKNVSVMTMIFKESSPSHPTRCHEDNVVVAVDSATNRILHFQKTQGLRRFSFPLSLFQGSGAGVEIRYDLLDCHISICSPQVAQLFTDNFDYQTRDDFVRGLLVNEEILGNQIHMHVTTREYGARVSNLHMYSAVCADVIRRWVYPLTPEANFTDSTAQSCTHSRHNIYRGPEVSLGHGSILEENVLLGSGTVIGSNCSITNSVIGPGCCIGDNVVLDRAYLWKGVQVASGAQIHQSLLCDHAEVKEQVTLKPHCVLTSQVVVGPNITLPEGSVISLHPPDAEEDEDDGQFSDDSGVNQAKEKAKLKGYNPAEVGVAGKGYLWKAADMNTEKEEELRQSLWGLTINEEEESETESERSMDSEELDSRAGSPQLDDIKVFQNEVLGTLQRGKEESISCDNLILEINSLKYAYNISLKEVMQVLSHVVLEFPLQQMDSPLEANRYCALLLPLLKAWSPVFRNYIKRAADHLEALAAIEEFFLEHEALGTCIAKVLMGFYQLEILAEETILSWFGQRDVTDKGRQLRKNQQLQRFIQWLKEAEEESSEDD.

Positions 1–40 (MATTVVAPPGAVSDRANKRGGGPGGGGGGGGARGAEEESP) are disordered. An N-acetylalanine modification is found at A2. An Omega-N-methylarginine modification is found at R19. Positions 19-33 (RGGGPGGGGGGGGAR) are enriched in gly residues. Residues K61 and K103 each participate in a glycyl lysine isopeptide (Lys-Gly) (interchain with G-Cter in ubiquitin) cross-link. A Phosphoserine modification is found at S130. Residues K141 and K217 each participate in a glycyl lysine isopeptide (Lys-Gly) (interchain with G-Cter in ubiquitin) cross-link. T322 carries the phosphothreonine modification. 2 disordered regions span residues 446–478 (GSVI…KEKA) and 517–545 (LTIN…AGSP). S450 carries the phosphoserine modification. Acidic residues predominate over residues 456–465 (AEEDEDDGQF). Residues S466, S469, S532, and S540 each carry the phosphoserine modification. The segment covering 528–540 (ESERSMDSEELDS) has biased composition (basic and acidic residues). Residues 543–720 (GSPQLDDIKV…KEAEEESSED (178 aa)) form the W2 domain. S544 is subject to Phosphoserine; by DYRK2. Position 717 is a phosphoserine (S717).

The protein belongs to the eIF-2B gamma/epsilon subunits family. As to quaternary structure, component of the translation initiation factor 2B (eIF2B) complex which is a heterodecamer of two sets of five different subunits: alpha, beta, gamma, delta and epsilon. Subunits alpha, beta and delta comprise a regulatory subcomplex and subunits epsilon and gamma comprise a catalytic subcomplex. Within the complex, the hexameric regulatory complex resides at the center, with the two heterodimeric catalytic subcomplexes bound on opposite sides. Phosphorylated at Ser-544 by DYRK2; this is required for subsequent phosphorylation by GSK3B. Phosphorylated on serine and threonine residues by GSK3B; phosphorylation inhibits its function. In terms of processing, polyubiquitinated, probably by NEDD4. Ubiquitously expressed.

It localises to the cytoplasm. It is found in the cytosol. With respect to regulation, activated by the chemical integrated stress response (ISR) inhibitor ISRIB which stimulates guanine nucleotide exchange factor activity for both phosphorylated and unphosphorylated eIF2. Acts as a component of the translation initiation factor 2B (eIF2B) complex, which catalyzes the exchange of GDP for GTP on eukaryotic initiation factor 2 (eIF2) gamma subunit. Its guanine nucleotide exchange factor activity is repressed when bound to eIF2 complex phosphorylated on the alpha subunit, thereby limiting the amount of methionyl-initiator methionine tRNA available to the ribosome and consequently global translation is repressed. The protein is Translation initiation factor eIF2B subunit epsilon (EIF2B5) of Oryctolagus cuniculus (Rabbit).